The sequence spans 211 residues: MARYIGPLEKLSRREGINLYLKGKRSYTEKSALRKRNYVPGQHGRQKQKLTQYAMQLRSKQALKRMYGLMERQFRNTFEEAERSRSGETGEVLMQLLERRLDSVVYQMGFAPNRRTARQIVTHGHILVNGKKVNIPSYRVKVGDVIEVKEKSRNIQQVREGLELVQEGYRNIPNWLNVEIENFRGTFQRLPKIDEMDVPVPLTNIIELYSK.

The 62-residue stretch at 99–160 folds into the S4 RNA-binding domain; sequence RRLDSVVYQM…KSRNIQQVRE (62 aa).

This sequence belongs to the universal ribosomal protein uS4 family. In terms of assembly, part of the 30S ribosomal subunit. Contacts protein S5. The interaction surface between S4 and S5 is involved in control of translational fidelity.

In terms of biological role, one of the primary rRNA binding proteins, it binds directly to 16S rRNA where it nucleates assembly of the body of the 30S subunit. Functionally, with S5 and S12 plays an important role in translational accuracy. The sequence is that of Small ribosomal subunit protein uS4 from Petrotoga mobilis (strain DSM 10674 / SJ95).